A 596-amino-acid chain; its full sequence is Cytochrome P450 monooxygenase FUM15 (596 aa).

Residues 476-512 (DRWLSPKNGNREATEQSKFKIGNQKRDSTAAPEVTQE) form a disordered region. A compositionally biased stretch (basic and acidic residues) spans 484–503 (GNREATEQSKFKIGNQKRDS). Cys-536 contacts heme.

This sequence belongs to the cytochrome P450 family. Requires heme as cofactor.

The protein resides in the endoplasmic reticulum. Its pathway is secondary metabolite biosynthesis. Cytochrome P450 monooxygenase; part of the gene cluster that mediates the biosynthesis of fumonisins B1 (FB1), B2 (FB2), B3 (FB3), and B4 (FB4), which are carcinogenic mycotoxins. Within the pathway, FUM15 may be responsible for the hydroxylations at positions C-14 and/or C-15. Also plays a role in self-protection from FB1 toxicity, probably through derivatization of FB1, and may contribute to ceramide biosynthesis. The biosynthesis starts with the FUM1-catalyzed carbon chain assembly from one molecule of acetyl-CoA, eight molecules of malonyl-CoA, and two molecules of methionine (in S-adenosyl form). The C18 polyketide chain is released from the enzyme by a nucleophilic attack of a carbanion, which is derived from R-carbon of alanine by decarboxylation, on the carbonyl carbon of polyketide acyl chain. This step is catalyzed by the pyridoxal 5'-phosphate-dependent aminoacyl transferase FUM8. The resultant 3-keto intermediate is then stereospecifically reduced to a 3-hydroxyl product by reductase FUM13. Subsequent oxidations at C-10 by the cytochrome P450 monooxygenase FUM2, C-14 and C-15 by FUM6, FUM12 or FUM15, tricarballylic esterification of the hydroxyl groups on C-14 and C-15 by acyltransferase FUM14, and C-5 hydroxylation by 2-keto-glutarate-dependent dioxygenase FUM3 furnish the biosynthesis of fumonisins. The tricarballylic moieties are most likely derived from the citric acid cycle, and their addition to the carbon backbone may involve FUM7, FUM10, FUM11 and FUM14. The sequence is that of Cytochrome P450 monooxygenase FUM15 from Gibberella moniliformis (strain M3125 / FGSC 7600) (Maize ear and stalk rot fungus).